The chain runs to 88 residues: Small ribosomal subunit protein uS17 (88 aa).

The protein belongs to the universal ribosomal protein uS17 family. Part of the 30S ribosomal subunit.

In terms of biological role, one of the primary rRNA binding proteins, it binds specifically to the 5'-end of 16S ribosomal RNA. This Pseudomonas entomophila (strain L48) protein is Small ribosomal subunit protein uS17.